A 355-amino-acid chain; its full sequence is Probable F-box protein At5g36000 (355 aa).

Residues methionine 1–glycine 14 are compositionally biased toward basic and acidic residues. The interval methionine 1 to glycine 44 is disordered. The region spanning glutamine 78–alanine 124 is the F-box; degenerate domain.

This Arabidopsis thaliana (Mouse-ear cress) protein is Probable F-box protein At5g36000.